A 209-amino-acid polypeptide reads, in one-letter code: Thiamine-phosphate synthase 1 (209 aa).

Residues 39–43 and asparagine 74 each bind 4-amino-2-methyl-5-(diphosphooxymethyl)pyrimidine; that span reads QFREK. Mg(2+) contacts are provided by aspartate 75 and aspartate 94. Serine 112 is a binding site for 4-amino-2-methyl-5-(diphosphooxymethyl)pyrimidine. 138-140 contributes to the 2-[(2R,5Z)-2-carboxy-4-methylthiazol-5(2H)-ylidene]ethyl phosphate binding site; the sequence is TQS. Lysine 141 contacts 4-amino-2-methyl-5-(diphosphooxymethyl)pyrimidine. Residues glycine 170 and 190 to 191 each bind 2-[(2R,5Z)-2-carboxy-4-methylthiazol-5(2H)-ylidene]ethyl phosphate; that span reads IS.

It belongs to the thiamine-phosphate synthase family. The cofactor is Mg(2+).

The enzyme catalyses 2-[(2R,5Z)-2-carboxy-4-methylthiazol-5(2H)-ylidene]ethyl phosphate + 4-amino-2-methyl-5-(diphosphooxymethyl)pyrimidine + 2 H(+) = thiamine phosphate + CO2 + diphosphate. The catalysed reaction is 2-(2-carboxy-4-methylthiazol-5-yl)ethyl phosphate + 4-amino-2-methyl-5-(diphosphooxymethyl)pyrimidine + 2 H(+) = thiamine phosphate + CO2 + diphosphate. It carries out the reaction 4-methyl-5-(2-phosphooxyethyl)-thiazole + 4-amino-2-methyl-5-(diphosphooxymethyl)pyrimidine + H(+) = thiamine phosphate + diphosphate. The protein operates within cofactor biosynthesis; thiamine diphosphate biosynthesis; thiamine phosphate from 4-amino-2-methyl-5-diphosphomethylpyrimidine and 4-methyl-5-(2-phosphoethyl)-thiazole: step 1/1. In terms of biological role, condenses 4-methyl-5-(beta-hydroxyethyl)thiazole monophosphate (THZ-P) and 2-methyl-4-amino-5-hydroxymethyl pyrimidine pyrophosphate (HMP-PP) to form thiamine monophosphate (TMP). This chain is Thiamine-phosphate synthase 1, found in Streptococcus pneumoniae serotype 4 (strain ATCC BAA-334 / TIGR4).